A 257-amino-acid polypeptide reads, in one-letter code: Neurotrophin-3 (257 aa).

The first 18 residues, Met1–Gly18, serve as a signal peptide directing secretion. A propeptide spanning residues Asn19–Arg138 is cleaved from the precursor. Residues Ser61–Glu81 are disordered. The segment covering Glu67 to Lys79 has biased composition (basic and acidic residues). Asn131 is a glycosylation site (N-linked (GlcNAc...) asparagine). Cystine bridges form between Cys152/Cys217, Cys195/Cys246, and Cys205/Cys248.

Belongs to the NGF-beta family.

The protein resides in the secreted. Seems to promote the survival of visceral and proprioceptive sensory neurons. This is Neurotrophin-3 (NTF3) from Sus scrofa (Pig).